Consider the following 219-residue polypeptide: Albonoursin synthase (219 aa).

Belongs to the nitroreductase family. In terms of assembly, homomer. It depends on FMN as a cofactor. The N-terminus is blocked.

The protein resides in the cytoplasm. It carries out the reaction cyclo(L-phenylalanyl-L-leucyl) + 2 O2 = albonoursin + 2 H2O2. Involved in the biosynthesis of albonoursin (cyclo[(alpha,beta-dehydro-Phe)-(alpha,beta-dehydro-Leu)]), an antibacterial peptide. Catalyzes the formation of alpha,beta-dehydro-Phe (DPhe) and alpha,beta-dehydro-Leu (DLeu) residues during the biosynthesis of albonoursin. The catalytic reaction of cyclo(L-Phe-L-Leu) occurs in a two-step sequential alpha-beta-dehydrogenation leading first to cyclo(alpha,beta-dehydro-Phe-L-Leu) and finally to albonoursin. Can also use cyclo(L-Phe-L-His), cyclo(L-Trp-L-Trp), cyclo(L-Leu-L-Ala), cyclo(L-Phe-Gly), cyclo(L-Leu-Gly), cyclo(L-Ser-Gly) and cyclo(L-Glu-Gly) as substrate suggesting that the diketopiperazine ring is essential for the enzymatic reaction. In Streptomyces noursei (Streptomyces albulus), this protein is Albonoursin synthase (albA).